Reading from the N-terminus, the 371-residue chain is D-alanine--D-alanine ligase (371 aa).

The ATP-grasp domain maps to 154–361 (KKLLVAEGLP…YPTLLAAMVD (208 aa)). 182-237 (RERLGLPVFVKPARGGSSIGVSRVSDWAELPAAIEAARRHDPKVIVEAGIAGRELE) provides a ligand contact to ATP. Asp316, Glu328, and Asn330 together coordinate Mg(2+).

It belongs to the D-alanine--D-alanine ligase family. Requires Mg(2+) as cofactor. The cofactor is Mn(2+).

It localises to the cytoplasm. It carries out the reaction 2 D-alanine + ATP = D-alanyl-D-alanine + ADP + phosphate + H(+). Its pathway is cell wall biogenesis; peptidoglycan biosynthesis. Functionally, cell wall formation. This is D-alanine--D-alanine ligase from Mycobacterium sp. (strain KMS).